We begin with the raw amino-acid sequence, 784 residues long: Cation/H(+) antiporter 26 (784 aa).

Helical transmembrane passes span 38 to 58 (PLLL…QALL), 61 to 81 (LANV…PSAL), 97 to 117 (YFII…ISTA), 130 to 150 (LAII…AIAC), 201 to 221 (LALS…LLLI), 240 to 260 (FTKV…FNWI), 286 to 306 (TFLS…LGLV), 321 to 341 (IGSF…GNKV), 351 to 371 (IISL…SIVL), 376 to 396 (FQVP…QGIY), and 413 to 433 (EAFG…TAIV).

It belongs to the monovalent cation:proton antiporter 2 (CPA2) transporter (TC 2.A.37) family. CHX (TC 2.A.37.4) subfamily. In terms of tissue distribution, expressed in pollen.

It is found in the membrane. Its function is as follows. May operate as a cation/H(+) antiporter. This Arabidopsis thaliana (Mouse-ear cress) protein is Cation/H(+) antiporter 26 (CHX26).